The following is a 362-amino-acid chain: Phosphoserine aminotransferase (362 aa).

L-glutamate-binding residues include serine 9 and arginine 42. Residues glycine 76–arginine 77, tryptophan 102, threonine 153, aspartate 174, and glutamine 197 contribute to the pyridoxal 5'-phosphate site. Lysine 198 carries the N6-(pyridoxal phosphate)lysine modification. Asparagine 239–threonine 240 serves as a coordination point for pyridoxal 5'-phosphate.

This sequence belongs to the class-V pyridoxal-phosphate-dependent aminotransferase family. SerC subfamily. Homodimer. The cofactor is pyridoxal 5'-phosphate.

It localises to the cytoplasm. It catalyses the reaction O-phospho-L-serine + 2-oxoglutarate = 3-phosphooxypyruvate + L-glutamate. The catalysed reaction is 4-(phosphooxy)-L-threonine + 2-oxoglutarate = (R)-3-hydroxy-2-oxo-4-phosphooxybutanoate + L-glutamate. Its pathway is amino-acid biosynthesis; L-serine biosynthesis; L-serine from 3-phospho-D-glycerate: step 2/3. It functions in the pathway cofactor biosynthesis; pyridoxine 5'-phosphate biosynthesis; pyridoxine 5'-phosphate from D-erythrose 4-phosphate: step 3/5. Catalyzes the reversible conversion of 3-phosphohydroxypyruvate to phosphoserine and of 3-hydroxy-2-oxo-4-phosphonooxybutanoate to phosphohydroxythreonine. This is Phosphoserine aminotransferase from Escherichia coli O157:H7.